The sequence spans 118 residues: Holo-[acyl-carrier-protein] synthase (118 aa).

Residues aspartate 8 and glutamate 58 each coordinate Mg(2+).

The protein belongs to the P-Pant transferase superfamily. AcpS family. Requires Mg(2+) as cofactor.

It localises to the cytoplasm. It carries out the reaction apo-[ACP] + CoA = holo-[ACP] + adenosine 3',5'-bisphosphate + H(+). Transfers the 4'-phosphopantetheine moiety from coenzyme A to a Ser of acyl-carrier-protein. This chain is Holo-[acyl-carrier-protein] synthase, found in Lactobacillus helveticus (strain DPC 4571).